Consider the following 900-residue polypeptide: 3'-5' exonuclease DinG (900 aa).

An Exonuclease domain is found at 8–161 (VVDLETTGNQ…DEDAATTAQL (154 aa)). The 256-residue stretch at 241-496 (TLVTKELGLT…KSIDLLEQQR (256 aa)) folds into the Helicase ATP-binding domain. 276 to 283 (APLGSGKS) serves as a coordination point for ATP. The DEAH box motif lies at 448-451 (DEAH). The Helicase C-terminal domain maps to 714–883 (YVIEYVSVVE…RYRQKKGDIK (170 aa)).

The protein belongs to the helicase family. DinG subfamily. Type 2 sub-subfamily.

Its function is as follows. 3'-5' exonuclease. This chain is 3'-5' exonuclease DinG, found in Staphylococcus saprophyticus subsp. saprophyticus (strain ATCC 15305 / DSM 20229 / NCIMB 8711 / NCTC 7292 / S-41).